The sequence spans 279 residues: Cyanocobalamin reductase / alkylcobalamin dealkylase (279 aa).

Residues Asp104, 115-118 (ILAQ), 129-131 (YYQ), Cys149, and Ile160 each bind substrate. The disordered stretch occupies residues 239 to 279 (PSEHPSTTSELPLSLLTKPQNSRRARSWLSPSVSPPVSPGP). Over residues 243–257 (PSTTSELPLSLLTKP) the composition is skewed to low complexity. Ser247, Ser272, and Ser276 each carry phosphoserine.

This sequence belongs to the MMACHC family. As to quaternary structure, monomer in the absence of bound substrate. Homodimer; dimerization is triggered by binding to FMN or adenosylcobalamin. Interacts with LMBRD1 and ABCD4; the interaction ensures the transport of cobalamin from the lysosome to the cytoplasm. Forms a multiprotein complex with MMADHC, MTR and MTRR; the interaction with MTR could modulate MMACHC-dependent processing of cobalamin. Heterodimer with MMADHC; the interaction might play a role in the regulation of the balance between AdoCbl and MeCbl synthesis. FAD is required as a cofactor. It depends on FMN as a cofactor. In terms of tissue distribution, detected in liver and kidney (at protein level). Detected in embryos.

The protein resides in the cytoplasm. It is found in the cytosol. It catalyses the reaction 2 cob(II)alamin-[cyanocobalamin reductase] + 2 hydrogen cyanide + NADP(+) = 2 cyanocob(III)alamin + 2 apo-[cyanocobalamin reductase] + NADPH + H(+). The enzyme catalyses apo-[alkylcobalamin reductase] + an R-cob(III)alamin + glutathione = cob(I)alamin-[alkylcobalamin reductase] + an S-substituted glutathione + H(+). The catalysed reaction is apo-[alkylcobalamin reductase] + methylcob(III)alamin + glutathione = S-methyl glutathione + cob(I)alamin-[alkylcobalamin reductase] + H(+). It carries out the reaction apo-[alkylcobalamin reductase] + adenosylcob(III)alamin + glutathione = S-adenosylglutathione + cob(I)alamin-[alkylcobalamin reductase] + H(+). Its function is as follows. Cobalamin (vitamin B12) cytosolic chaperone that catalyzes the reductive decyanation of cyanocob(III)alamin (cyanocobalamin, CNCbl) to yield cob(II)alamin and cyanide, using FAD or FMN as cofactors and NADPH as cosubstrate. Cyanocobalamin constitutes the inactive form of vitamin B12 introduced from the diet, and is converted into the active cofactors methylcobalamin (MeCbl) involved in methionine biosynthesis, and 5'-deoxyadenosylcobalamin (AdoCbl) involved in the TCA cycle. Forms a complex with the lysosomal transporter ABCD4 and its chaperone LMBRD1, to transport cobalamin across the lysosomal membrane into the cytosol. The processing of cobalamin in the cytosol occurs in a multiprotein complex composed of at least MMACHC, MMADHC, MTRR (methionine synthase reductase) and MTR (methionine synthase) which may contribute to shuttle safely and efficiently cobalamin towards MTR in order to produce methionine. Also acts as a glutathione transferase by catalyzing the dealkylation of the alkylcob(III)alamins MeCbl and AdoCbl, using the thiolate of glutathione for nucleophilic displacement to generate cob(I)alamin and the corresponding glutathione thioether. The conversion of incoming MeCbl or AdoCbl into a common intermediate cob(I)alamin is necessary to meet the cellular needs for both cofactors. Cysteine and homocysteine cannot substitute for glutathione in this reaction. This Mus musculus (Mouse) protein is Cyanocobalamin reductase / alkylcobalamin dealkylase.